We begin with the raw amino-acid sequence, 117 residues long: Immunoglobulin heavy variable 1-24 (117 aa).

Positions 1 to 19 (MDCTWRILFLVAAATGTHA) are cleaved as a signal peptide. Positions 20–44 (QVQLVQSGAEVKKPGASVKVSCKVS) are framework-1. Residues 20-117 (QVQLVQSGAE…EDTAVYYCAT (98 aa)) enclose the Ig-like domain. A disulfide bridge connects residues Cys-41 and Cys-115. The tract at residues 45–52 (GYTLTELS) is complementarity-determining-1. The segment at 53-69 (MHWVRQAPGKGLEWMGG) is framework-2. The segment at 70–77 (FDPEDGET) is complementarity-determining-2. The interval 78–115 (IYAQKFQGRVTMTEDTSTDTAYMELSSLRSEDTAVYYC) is framework-3. Residues 116–117 (AT) are complementarity-determining-3.

As to quaternary structure, immunoglobulins are composed of two identical heavy chains and two identical light chains; disulfide-linked.

It localises to the secreted. The protein localises to the cell membrane. V region of the variable domain of immunoglobulin heavy chains that participates in the antigen recognition. Immunoglobulins, also known as antibodies, are membrane-bound or secreted glycoproteins produced by B lymphocytes. In the recognition phase of humoral immunity, the membrane-bound immunoglobulins serve as receptors which, upon binding of a specific antigen, trigger the clonal expansion and differentiation of B lymphocytes into immunoglobulins-secreting plasma cells. Secreted immunoglobulins mediate the effector phase of humoral immunity, which results in the elimination of bound antigens. The antigen binding site is formed by the variable domain of one heavy chain, together with that of its associated light chain. Thus, each immunoglobulin has two antigen binding sites with remarkable affinity for a particular antigen. The variable domains are assembled by a process called V-(D)-J rearrangement and can then be subjected to somatic hypermutations which, after exposure to antigen and selection, allow affinity maturation for a particular antigen. This chain is Immunoglobulin heavy variable 1-24, found in Homo sapiens (Human).